A 95-amino-acid chain; its full sequence is Acylphosphatase (95 aa).

Residues 7-95 (CTMAWVYGSV…RSWDKFAILY (89 aa)) enclose the Acylphosphatase-like domain. Active-site residues include arginine 22 and asparagine 40.

Belongs to the acylphosphatase family.

The enzyme catalyses an acyl phosphate + H2O = a carboxylate + phosphate + H(+). The chain is Acylphosphatase (acyP) from Klebsiella pneumoniae subsp. pneumoniae (strain ATCC 700721 / MGH 78578).